We begin with the raw amino-acid sequence, 134 residues long: Small ribosomal subunit protein uS8c (134 aa).

In terms of assembly, component of the chloroplast small ribosomal subunit (SSU). Mature 70S chloroplast ribosomes of higher plants consist of a small (30S) and a large (50S) subunit. The 30S small subunit contains 1 molecule of ribosomal RNA (16S rRNA) and 24 different proteins. The 50S large subunit contains 3 rRNA molecules (23S, 5S and 4.5S rRNA) and 33 different proteins.

It localises to the plastid. It is found in the chloroplast. Component of the chloroplast ribosome (chloro-ribosome), a dedicated translation machinery responsible for the synthesis of chloroplast genome-encoded proteins, including proteins of the transcription and translation machinery and components of the photosynthetic apparatus. The polypeptide is Small ribosomal subunit protein uS8c (rps8) (Spinacia oleracea (Spinach)).